Consider the following 353-residue polypeptide: Chemerin-like receptor 2 (353 aa).

The Extracellular portion of the chain corresponds to 1-41 (MEVSREMLFEELDNYSYALEYYSQEPDAEENVYPGIVHWIS). Residue Asn-14 is glycosylated (N-linked (GlcNAc...) asparagine). The helical transmembrane segment at 42 to 62 (LLLYALAFVLGIPGNAIVIWF) threads the bilayer. The Cytoplasmic segment spans residues 63–73 (MGFKWKKTVTT). A helical membrane pass occupies residues 74 to 94 (LWFLNLAIADFVFVLFLPLYI). The Extracellular portion of the chain corresponds to 95–112 (SYVALSFHWPFGRWLCKL). Cysteines 110 and 187 form a disulfide. The helical transmembrane segment at 113-133 (NSFIAQLNMFSSVFFLTVISL) threads the bilayer. The Cytoplasmic segment spans residues 134–154 (DRYIHLIHPGLSHPHRTLKNS). Residues 155-175 (LLVVLFVWLLASLLGGPTLYF) traverse the membrane as a helical segment. Topologically, residues 176-210 (RDTVEVNNRIICYNNFQEYELTLMRHHVLTWVKFL) are extracellular. Residues 211 to 231 (FGYLLPLLTMSSCYLCLIFKT) form a helical membrane-spanning segment. Residues 232–247 (KKQNILISSKHLWMIL) are Cytoplasmic-facing. Residues 248-268 (SVVIAFMVCWTPFHLFSIWEL) traverse the membrane as a helical segment. Residues 269 to 286 (SIHHNSSFQNVLQGGIPL) lie on the Extracellular side of the membrane. The helical transmembrane segment at 287 to 307 (STGLAFLNSCLNPILYVLISK) threads the bilayer. Topologically, residues 308–353 (KFQARFRASVAEVLKRSLWEASCSGTVSEQLRSAETKSLSLLETAQ) are cytoplasmic.

Belongs to the chemokine-like receptor (CMKLR) family.

It localises to the cell membrane. Its function is as follows. Receptor for chemoattractant adipokine chemerin/RARRES2 suggesting a role for this receptor in the regulation of inflammation and energy homesotasis. Signals mainly via beta-arrestin pathway. Binding of RARRES2 activates weakly G proteins, calcium mobilization and MAPK1/MAPK3 (ERK1/2) phosphorylation too. Acts also as a receptor for TAFA1, mediates its effects on neuronal stem-cell proliferation and differentiation via the activation of ROCK/ERK and ROCK/STAT3 signaling pathway. The polypeptide is Chemerin-like receptor 2 (Cmklr2) (Rattus norvegicus (Rat)).